A 574-amino-acid polypeptide reads, in one-letter code: Membrane protein insertase YidC (574 aa).

Residues 6 to 26 form a helical membrane-spanning segment; the sequence is VFLIFAWLMVAALLWMEWGKE. The tract at residues 65–85 is disordered; sequence QAGAPGKVPATSTTTATPAAA. 5 consecutive transmembrane segments (helical) span residues 350–370, 376–396, 447–467, 491–511, and 525–545; these read VIDY…FWVL, FLHN…LVLY, GGCL…WVLV, FILP…TPTP, and PLVF…YWVV.

Belongs to the OXA1/ALB3/YidC family. Type 1 subfamily. Interacts with the Sec translocase complex via SecD. Specifically interacts with transmembrane segments of nascent integral membrane proteins during membrane integration.

Its subcellular location is the cell inner membrane. Functionally, required for the insertion and/or proper folding and/or complex formation of integral membrane proteins into the membrane. Involved in integration of membrane proteins that insert both dependently and independently of the Sec translocase complex, as well as at least some lipoproteins. Aids folding of multispanning membrane proteins. The polypeptide is Membrane protein insertase YidC (Xanthomonas oryzae pv. oryzae (strain PXO99A)).